The sequence spans 439 residues: MRLSRFFLPILKETPKEAEIVSHRLMLRAGMMRQEAAGIYAWLPLGLRVLKKIEQIVREEQNRAGAIECLMPTLQLADLWRESGRYDAYGPEMLRITDRHKRELLYGPTNEEMITEIFRAYVRSYKNLPLNLYHIQWKFRDEQRPRFGVMRGREFLMKDAYSFDIDEAAARKSYNRMFVAYLRTFARMGLKAIPMRAETGPIGGDLSHEFIVLAETGESGVFCDSDVLNLPVPGDDVDYDGDLTPIIKQWTSVYAATEDVHDAERFEREVPADKKLNTRGIEVGQIFYFGTKYSDKMKALVAGPDGVDVPVHGGSYGVGVSRLVGAIIEACHDENGIKWPEEVAPFRAAILNLKQGSADTDAACEALYKELSAKGVDVLYDDTDQRAGGKFATADLIGIPWQILVGPKGLAEGKVELKRRADGSRENVTPAEAVARLTT.

This sequence belongs to the class-II aminoacyl-tRNA synthetase family. ProS type 2 subfamily. As to quaternary structure, homodimer.

It is found in the cytoplasm. The catalysed reaction is tRNA(Pro) + L-proline + ATP = L-prolyl-tRNA(Pro) + AMP + diphosphate. Catalyzes the attachment of proline to tRNA(Pro) in a two-step reaction: proline is first activated by ATP to form Pro-AMP and then transferred to the acceptor end of tRNA(Pro). The sequence is that of Proline--tRNA ligase from Rhodopseudomonas palustris (strain BisB18).